Reading from the N-terminus, the 131-residue chain is Small ribosomal subunit protein bS6 (131 aa).

The disordered stretch occupies residues 100 to 131 (SPMVKAKDERRSRDYSLEDANMDAEEAGDSEE). Residues 104 to 115 (KAKDERRSRDYS) are compositionally biased toward basic and acidic residues. Positions 119 to 131 (ANMDAEEAGDSEE) are enriched in acidic residues.

The protein belongs to the bacterial ribosomal protein bS6 family.

Its function is as follows. Binds together with bS18 to 16S ribosomal RNA. The polypeptide is Small ribosomal subunit protein bS6 (Photorhabdus laumondii subsp. laumondii (strain DSM 15139 / CIP 105565 / TT01) (Photorhabdus luminescens subsp. laumondii)).